A 508-amino-acid chain; its full sequence is UDP-N-acetylmuramoylalanine--D-glutamate ligase (508 aa).

Residue 138–144 coordinates ATP; that stretch reads GTNGKTT.

Belongs to the MurCDEF family.

The protein resides in the cytoplasm. The enzyme catalyses UDP-N-acetyl-alpha-D-muramoyl-L-alanine + D-glutamate + ATP = UDP-N-acetyl-alpha-D-muramoyl-L-alanyl-D-glutamate + ADP + phosphate + H(+). It functions in the pathway cell wall biogenesis; peptidoglycan biosynthesis. Its function is as follows. Cell wall formation. Catalyzes the addition of glutamate to the nucleotide precursor UDP-N-acetylmuramoyl-L-alanine (UMA). The chain is UDP-N-acetylmuramoylalanine--D-glutamate ligase from Bordetella avium (strain 197N).